Consider the following 607-residue polypeptide: MTQTFDPSAFLATCSGRPGVYRMFDAEATLLYVGKAKNLKKRLASYFRKTGHAPKTGALVSRIAQIETTITGNETEALLLEQTLIKEWRPPYNILLRDDKSYPYVFLSDGNYPRLSIHRGAKKAKGRYFGPYPSAGAIRESLSLLQKTFQVRQCEDSYFKNRTRPCLQYQIKRCKGPCVGLVEPEVYAEDVRHSVMFLEGRSNALSDELNATMEKAAMALDFERAAELRDQVALLRRVQDQQSMDGATGDVDVVAAFVNPGGACVHLISVRGGRVLGSKNFFPQVGIEEEVGEVMSAFLAQYFLGGIDRELPGEVIVNVINDDFPAFVDAVEELRGVEMVISHRVRGTRARWQQMAVTNAEQALTARLANRQHVASRFEALAKVLGLEDPPMRLECYDISHSSGEATVASCVVFGPEGPIKSDYRRFNIEGVTAGDDYAAMHQALTRRYSRIKAGEGKLPDVLLVDGGKGQMSMARDVLNELQVPDLILLGVAKGTTRKAGFETLYLNDAAHEFTLPGDSPALHLIQQIRDEAHRFAITGHRARRGKTRRTSTLEGVAGVGPTRRRDLLKHFGGLQELSRASIDEIAKAPGISKKLAESIYANLHSE.

In terms of domain architecture, GIY-YIG spans 16–94 (GRPGVYRMFD…IKEWRPPYNI (79 aa)). The 36-residue stretch at 203–238 (NALSDELNATMEKAAMALDFERAAELRDQVALLRRV) folds into the UVR domain.

The protein belongs to the UvrC family. As to quaternary structure, interacts with UvrB in an incision complex.

It is found in the cytoplasm. In terms of biological role, the UvrABC repair system catalyzes the recognition and processing of DNA lesions. UvrC both incises the 5' and 3' sides of the lesion. The N-terminal half is responsible for the 3' incision and the C-terminal half is responsible for the 5' incision. This is UvrABC system protein C from Pseudomonas savastanoi pv. phaseolicola (strain 1448A / Race 6) (Pseudomonas syringae pv. phaseolicola (strain 1448A / Race 6)).